A 255-amino-acid chain; its full sequence is MNLAVVGYKLTLSYCGSGFHGWQRQGELPTVQRALEEAVAKIWEEPIPVEGAGRTDAGVHAKGQVASFAAPRKLEPEVLKRALNYHLPDTVRVWDARIVPREFSARFDAVSKTYQYLLWNDPVMDPFYLGRAWHIPRAMDVEMMNEAARLFLGKHNFAAFVSNPGMPVKNPVRTVLDCFFLEQGSLVFFNVKADGFLYRMVRNMVGALVKVGLGRLSRQELKKIFENQKRIEAFAAAPPWGLYLLAVDYPPDQES.

The active-site Nucleophile is D56. Y114 lines the substrate pocket.

Belongs to the tRNA pseudouridine synthase TruA family. As to quaternary structure, homodimer.

It carries out the reaction uridine(38/39/40) in tRNA = pseudouridine(38/39/40) in tRNA. In terms of biological role, formation of pseudouridine at positions 38, 39 and 40 in the anticodon stem and loop of transfer RNAs. This Methylacidiphilum infernorum (isolate V4) (Methylokorus infernorum (strain V4)) protein is tRNA pseudouridine synthase A.